A 271-amino-acid polypeptide reads, in one-letter code: uncharacterized protein (271 aa).

This is an uncharacterized protein from Saccharomyces cerevisiae (strain ATCC 204508 / S288c) (Baker's yeast).